A 131-amino-acid polypeptide reads, in one-letter code: D-ribose pyranase (131 aa).

The Proton donor role is filled by H20. Substrate contacts are provided by residues D28, H98, and 120–122; that span reads YAN.

It belongs to the RbsD / FucU family. RbsD subfamily. In terms of assembly, homodecamer.

Its subcellular location is the cytoplasm. It carries out the reaction beta-D-ribopyranose = beta-D-ribofuranose. It functions in the pathway carbohydrate metabolism; D-ribose degradation; D-ribose 5-phosphate from beta-D-ribopyranose: step 1/2. Its function is as follows. Catalyzes the interconversion of beta-pyran and beta-furan forms of D-ribose. This Bacillus velezensis (strain DSM 23117 / BGSC 10A6 / LMG 26770 / FZB42) (Bacillus amyloliquefaciens subsp. plantarum) protein is D-ribose pyranase.